The primary structure comprises 270 residues: MHLQPSTAVVTGAASGIGFALSARLAQAGARVVMTDIAGDGLAGAVEELAAHGADVTAVVADLTDPAAVQELADTAFGRLGDIDVVCNNAGVVGPVGMPLWSVPLDEMHAVFDVNYWAHVHVARAFVPRLLDSGRPSHLVQTASMSAFVVGAGTASYAASKHADLAAARSLRADLDGTPVRVSVLCPGRVDTPMTRGLVAPRNATGNTTISADEAADAVWNALGSDRFYIFTNADAQTRLGDQFNDVWRHLAREKYWTESSSPSVNSSRP.

12–36 (GAASGIGFALSARLAQAGARVVMTD) is a binding site for NAD(+). Serine 144 is a substrate binding site. Catalysis depends on tyrosine 157, which acts as the Proton acceptor. An NAD(+)-binding site is contributed by lysine 161.

The protein belongs to the short-chain dehydrogenases/reductases (SDR) family.

The catalysed reaction is 1-deoxy-11beta-hydroxypentalenate + NAD(+) = 1-deoxy-11-oxopentalenate + NADH + H(+). Its pathway is antibiotic biosynthesis; neopentalenolactone biosynthesis. In terms of biological role, catalyzes the oxidation of 1-deoxy-11-beta-hydroxypentalenic acid to 1-deoxy-11-oxopentalenic acid in the biosynthesis of neopentalenolactone antibiotic. This Streptomyces avermitilis (strain ATCC 31267 / DSM 46492 / JCM 5070 / NBRC 14893 / NCIMB 12804 / NRRL 8165 / MA-4680) protein is 1-deoxy-11-beta-hydroxypentalenate dehydrogenase (ptlF).